The sequence spans 130 residues: DNA-directed RNA polymerase subunit omega (130 aa).

The tract at residues 109–130 is disordered; that stretch reads EEELLKGLEGLAPPEEQPEEDE.

It belongs to the RNA polymerase subunit omega family. The RNAP catalytic core consists of 2 alpha, 1 beta, 1 beta' and 1 omega subunit. When a sigma factor is associated with the core the holoenzyme is formed, which can initiate transcription.

It carries out the reaction RNA(n) + a ribonucleoside 5'-triphosphate = RNA(n+1) + diphosphate. Functionally, promotes RNA polymerase assembly. Latches the N- and C-terminal regions of the beta' subunit thereby facilitating its interaction with the beta and alpha subunits. In Rhodopseudomonas palustris (strain BisA53), this protein is DNA-directed RNA polymerase subunit omega.